Here is a 116-residue protein sequence, read N- to C-terminus: Large ribosomal subunit protein bL19 (116 aa).

Belongs to the bacterial ribosomal protein bL19 family.

Functionally, this protein is located at the 30S-50S ribosomal subunit interface and may play a role in the structure and function of the aminoacyl-tRNA binding site. The sequence is that of Large ribosomal subunit protein bL19 from Magnetococcus marinus (strain ATCC BAA-1437 / JCM 17883 / MC-1).